The following is a 38-amino-acid chain: Photosystem II reaction center protein L (38 aa).

The helical transmembrane segment at serine 17 to phenylalanine 37 threads the bilayer.

This sequence belongs to the PsbL family. As to quaternary structure, PSII is composed of 1 copy each of membrane proteins PsbA, PsbB, PsbC, PsbD, PsbE, PsbF, PsbH, PsbI, PsbJ, PsbK, PsbL, PsbM, PsbT, PsbX, PsbY, PsbZ, Psb30/Ycf12, at least 3 peripheral proteins of the oxygen-evolving complex and a large number of cofactors. It forms dimeric complexes.

The protein resides in the plastid. The protein localises to the chloroplast thylakoid membrane. In terms of biological role, one of the components of the core complex of photosystem II (PSII). PSII is a light-driven water:plastoquinone oxidoreductase that uses light energy to abstract electrons from H(2)O, generating O(2) and a proton gradient subsequently used for ATP formation. It consists of a core antenna complex that captures photons, and an electron transfer chain that converts photonic excitation into a charge separation. This subunit is found at the monomer-monomer interface and is required for correct PSII assembly and/or dimerization. This Chara vulgaris (Common stonewort) protein is Photosystem II reaction center protein L.